The following is a 430-amino-acid chain: Adenylosuccinate synthetase (430 aa).

Residues 12–18 (GDEGKGK) and 40–42 (GHT) contribute to the GTP site. Aspartate 13 serves as the catalytic Proton acceptor. Aspartate 13 and glycine 40 together coordinate Mg(2+). Residues 13–16 (DEGK), 38–41 (NAGH), threonine 128, arginine 142, glutamine 223, threonine 238, and arginine 302 each bind IMP. Catalysis depends on histidine 41, which acts as the Proton donor. 298–304 (TTTGRPR) serves as a coordination point for substrate. Residues arginine 304, 330–332 (SID), and 413–415 (SVG) contribute to the GTP site.

This sequence belongs to the adenylosuccinate synthetase family. In terms of assembly, homodimer. Mg(2+) serves as cofactor.

The protein resides in the cytoplasm. It carries out the reaction IMP + L-aspartate + GTP = N(6)-(1,2-dicarboxyethyl)-AMP + GDP + phosphate + 2 H(+). Its pathway is purine metabolism; AMP biosynthesis via de novo pathway; AMP from IMP: step 1/2. Functionally, plays an important role in the de novo pathway of purine nucleotide biosynthesis. Catalyzes the first committed step in the biosynthesis of AMP from IMP. In Lactococcus lactis subsp. lactis (strain IL1403) (Streptococcus lactis), this protein is Adenylosuccinate synthetase.